A 574-amino-acid polypeptide reads, in one-letter code: Septation ring formation regulator EzrA (574 aa).

Over 1 to 7 (MSSGIVL) the chain is Extracellular. A helical transmembrane segment spans residues 8–26 (LIVAIVLVVIIAYLIAIII). The Cytoplasmic segment spans residues 27 to 574 (RKRNDSLITK…YEKTRETIRF (548 aa)). Coiled-coil stretches lie at residues 102 to 141 (NFIR…EEKN), 255 to 368 (KNIE…KDVL), and 409 to 495 (LKNI…EETA).

It belongs to the EzrA family.

Its subcellular location is the cell membrane. Functionally, negative regulator of FtsZ ring formation; modulates the frequency and position of FtsZ ring formation. Inhibits FtsZ ring formation at polar sites. Interacts either with FtsZ or with one of its binding partners to promote depolymerization. The protein is Septation ring formation regulator EzrA of Streptococcus mutans serotype c (strain ATCC 700610 / UA159).